The primary structure comprises 493 residues: Ectonucleotide pyrophosphatase/phosphodiesterase 2 (493 aa).

At 1 to 28 (MLLFEQPVDLEKNNEDDTNIKPFAISRH) the chain is on the cytoplasmic side. A helical; Signal-anchor for type II membrane protein transmembrane segment spans residues 29-45 (FLLKLLLCGIILIELLL). The Extracellular portion of the chain corresponds to 46–493 (YSKCPKPIDN…KTKKEKSLLQ (448 aa)). Residues N62, N69, and N112 are each glycosylated (N-linked (GlcNAc...) asparagine). Residues 76-438 (TLTILISIDG…IGIMGTHGYN (363 aa)) form a phosphodiesterase region. T127 functions as the Nucleophile in the catalytic mechanism. N-linked (GlcNAc...) asparagine glycosylation is found at N153 and N441.

The protein belongs to the nucleotide pyrophosphatase/phosphodiesterase family. Autophosphorylated as part of the catalytic cycle of phosphodiesterase/pyrophosphatase activity.

The protein resides in the membrane. The enzyme catalyses Hydrolytically removes 5'-nucleotides successively from the 3'-hydroxy termini of 3'-hydroxy-terminated oligonucleotides.. It catalyses the reaction a ribonucleoside 5'-triphosphate + H2O = a ribonucleoside 5'-phosphate + diphosphate + H(+). It carries out the reaction a 2'-deoxyribonucleoside 5'-triphosphate + H2O = a 2'-deoxyribonucleoside 5'-phosphate + diphosphate + H(+). Its function is as follows. Mediates extracellular nucleotide derived phosphate hydrolysis along with NPP1 and PHO5. The protein is Ectonucleotide pyrophosphatase/phosphodiesterase 2 (NPP2) of Saccharomyces cerevisiae (strain ATCC 204508 / S288c) (Baker's yeast).